Consider the following 235-residue polypeptide: Class B acid phosphatase (235 aa).

A signal peptide spans Met-1–Ala-22. The active-site Nucleophile is Asp-67. Residues Asp-67 and Asp-69 each contribute to the Mg(2+) site. Asp-69 serves as the catalytic Proton donor. Residues Thr-135–Gly-136 and Lys-175 contribute to the substrate site. Residue Asp-190 coordinates Mg(2+).

Belongs to the class B bacterial acid phosphatase family. As to quaternary structure, homotetramer. Mg(2+) is required as a cofactor.

It localises to the periplasm. The catalysed reaction is a phosphate monoester + H2O = an alcohol + phosphate. Dephosphorylates several organic phosphate monoesters. Also has a phosphotransferase activity catalyzing the transfer of low-energy phosphate groups from organic phosphate monoesters to free hydroxyl groups of various organic compounds. The sequence is that of Class B acid phosphatase from Haemophilus parainfluenzae (strain T3T1).